The primary structure comprises 2198 residues: Activating signal cointegrator 1 complex subunit 3 (2198 aa).

Ser12 is subject to Phosphoserine. Coiled coils occupy residues 18–81 (KQDN…KQIV) and 328–356 (IQSE…KAGE). A Helicase ATP-binding 1 domain is found at 487–670 (ETAYNTNENM…FLHVNPYIGL (184 aa)). 500 to 507 (APTGAGKT) provides a ligand contact to ATP. At Lys573 the chain carries N6-acetyllysine. The short motif at 612 to 615 (DEVH) is the DEVH box element. Residues 697–915 (QLNNMDEVCY…GTVTNVEEAV (219 aa)) form the Helicase C-terminal 1 domain. The SEC63 1 domain occupies 979 to 1288 (STDLGRTASH…GAEAVCIINF (310 aa)). The Helicase ATP-binding 2 domain occupies 1337 to 1512 (HTLYHTDCNV…WLNIKQMGLF (176 aa)). 1350–1357 (APTGSGKT) provides a ligand contact to ATP. The DEIH box signature appears at 1454 to 1457 (DEIH). One can recognise a Helicase C-terminal 2 domain in the interval 1545–1740 (PAFQAIRSHS…VLSDHLNAEI (196 aa)). In terms of domain architecture, SEC63 2 spans 1813–2177 (PLTCGRIASY…LGLDQQYDIY (365 aa)).

This sequence belongs to the helicase family. In terms of assembly, identified in the ASCC complex that contains ASCC1, ASCC2 and ASCC3. Functions as a scaffolding subunit that interacts directly with both ASCC1 and ASCC2. Interacts directly with ALKBH3, and thereby recruits ALKBH3 to the ASCC complex. Part of the ASC-1/TRIP4 complex, that contains TRIP4, ASCC1, ASCC2 and ASCC3. Part of the RQT (ribosome quality control trigger) complex, that contains ASCC2, ASCC3 and TRIP4. Associates with ribosomes; recruited to collided ribosomes. Interacts with ZCCHC4. Interacts with ZNF598. Interacts with RPS3.

It localises to the nucleus. Its subcellular location is the nucleus speckle. The protein localises to the cytoplasm. It is found in the cytosol. It catalyses the reaction Couples ATP hydrolysis with the unwinding of duplex DNA by translocating in the 3'-5' direction.. The enzyme catalyses ATP + H2O = ADP + phosphate + H(+). Functionally, ATPase involved both in DNA repair and rescue of stalled ribosomes. 3'-5' DNA helicase involved in repair of alkylated DNA: promotes DNA unwinding to generate single-stranded substrate needed for ALKBH3, enabling ALKBH3 to process alkylated N3-methylcytosine (3mC) within double-stranded regions. Also involved in activation of the ribosome quality control (RQC) pathway, a pathway that degrades nascent peptide chains during problematic translation. Drives the splitting of stalled ribosomes that are ubiquitinated in a ZNF598-dependent manner, as part of the ribosome quality control trigger (RQT) complex. Part of the ASC-1 complex that enhances NF-kappa-B, SRF and AP1 transactivation. This Mus musculus (Mouse) protein is Activating signal cointegrator 1 complex subunit 3 (Ascc3).